The chain runs to 246 residues: Small ribosomal subunit protein uS2 (246 aa).

Belongs to the universal ribosomal protein uS2 family.

The polypeptide is Small ribosomal subunit protein uS2 (Helicobacter acinonychis (strain Sheeba)).